The chain runs to 199 residues: Probable NADH dehydrogenase [ubiquinone] iron-sulfur protein 7, mitochondrial (199 aa).

A mitochondrion-targeting transit peptide spans 1-16 (MLSALRTAGALSTRRL). [4Fe-4S] cluster-binding residues include Cys-74, Cys-75, Cys-139, and Cys-169.

It belongs to the complex I 20 kDa subunit family. As to quaternary structure, complex I is composed of 45 different subunits This is a component of the iron-sulfur (IP) fragment of the enzyme. [4Fe-4S] cluster is required as a cofactor.

Its subcellular location is the mitochondrion. The catalysed reaction is a ubiquinone + NADH + 5 H(+)(in) = a ubiquinol + NAD(+) + 4 H(+)(out). In terms of biological role, core subunit of the mitochondrial membrane respiratory chain NADH dehydrogenase (Complex I) that is believed to belong to the minimal assembly required for catalysis. Complex I functions in the transfer of electrons from NADH to the respiratory chain. The immediate electron acceptor for the enzyme is believed to be ubiquinone. This Caenorhabditis briggsae protein is Probable NADH dehydrogenase [ubiquinone] iron-sulfur protein 7, mitochondrial.